The sequence spans 348 residues: NADH-ubiquinone oxidoreductase chain 2 (348 aa).

9 consecutive transmembrane segments (helical) span residues 13–33, 60–80, 96–116, 124–144, 150–170, 200–220, 241–261, 278–298, and 325–345; these read VITGTLITMLSSHWFLAWAGL, FLAQSTASMILMMAIISNNLL, PLAMTIALTMKLGMAPFHFWV, PLTSGLLLLTWQKLAPISIMY, INTHILLILSTLSIAVGSWGG, TITTLYLITYITLTTTMFLTL, LMPLMTSTLLSLGGLPPLTGF, IIPTIMITMTLLNLYFYMRLI, and LFIPALITISTLLLPISPLIL.

Belongs to the complex I subunit 2 family. Core subunit of respiratory chain NADH dehydrogenase (Complex I) which is composed of 45 different subunits. Interacts with TMEM242.

The protein resides in the mitochondrion inner membrane. It catalyses the reaction a ubiquinone + NADH + 5 H(+)(in) = a ubiquinol + NAD(+) + 4 H(+)(out). In terms of biological role, core subunit of the mitochondrial membrane respiratory chain NADH dehydrogenase (Complex I) which catalyzes electron transfer from NADH through the respiratory chain, using ubiquinone as an electron acceptor. Essential for the catalytic activity and assembly of complex I. The protein is NADH-ubiquinone oxidoreductase chain 2 of Papio hamadryas (Hamadryas baboon).